The primary structure comprises 363 residues: 3-dehydroquinate synthase (363 aa).

NAD(+) contacts are provided by residues 72 to 77 (SGEQSK), 106 to 110 (GVIGD), 130 to 131 (TT), K142, and K151. Positions 184, 246, and 263 each coordinate Zn(2+).

It belongs to the sugar phosphate cyclases superfamily. Dehydroquinate synthase family. It depends on Co(2+) as a cofactor. Zn(2+) serves as cofactor. NAD(+) is required as a cofactor.

Its subcellular location is the cytoplasm. It catalyses the reaction 7-phospho-2-dehydro-3-deoxy-D-arabino-heptonate = 3-dehydroquinate + phosphate. It functions in the pathway metabolic intermediate biosynthesis; chorismate biosynthesis; chorismate from D-erythrose 4-phosphate and phosphoenolpyruvate: step 2/7. Catalyzes the conversion of 3-deoxy-D-arabino-heptulosonate 7-phosphate (DAHP) to dehydroquinate (DHQ). This chain is 3-dehydroquinate synthase, found in Bacillus pumilus (strain SAFR-032).